The primary structure comprises 196 residues: Large ribosomal subunit protein eL15 (196 aa).

2 stretches are compositionally biased toward basic residues: residues 160 to 172 (ATRG…RKGR) and 186 to 196 (PSIRAHKSRGK). Positions 160–196 (ATRGKTSAGRKGRGMSTRGKGTEKTRPSIRAHKSRGK) are disordered.

It belongs to the eukaryotic ribosomal protein eL15 family.

The chain is Large ribosomal subunit protein eL15 (rpl15e) from Methanosarcina mazei (strain ATCC BAA-159 / DSM 3647 / Goe1 / Go1 / JCM 11833 / OCM 88) (Methanosarcina frisia).